We begin with the raw amino-acid sequence, 615 residues long: DNA mismatch repair protein MutL (615 aa).

It belongs to the DNA mismatch repair MutL/HexB family.

Its function is as follows. This protein is involved in the repair of mismatches in DNA. It is required for dam-dependent methyl-directed DNA mismatch repair. May act as a 'molecular matchmaker', a protein that promotes the formation of a stable complex between two or more DNA-binding proteins in an ATP-dependent manner without itself being part of a final effector complex. This Histophilus somni (strain 2336) (Haemophilus somnus) protein is DNA mismatch repair protein MutL.